Consider the following 302-residue polypeptide: Bifunctional phosphoglucose/phosphomannose isomerase (302 aa).

The SIS domain occupies V27 to P160. D-fructose 6-phosphate contacts are provided by G47, S48, S87, S89, T92, and R135. D-glucose 6-phosphate is bound by residues G47, S48, S87, S89, T92, and R135. E203 (proton acceptor) is an active-site residue. Positions 219 and 298 each coordinate D-fructose 6-phosphate. D-glucose 6-phosphate-binding residues include H219 and K298. The active-site Proton donor is H219. The Proton acceptor role is filled by K298.

The protein belongs to the PGI/PMI family. In terms of assembly, homodimer.

The protein localises to the cytoplasm. It carries out the reaction alpha-D-glucose 6-phosphate = beta-D-fructose 6-phosphate. The catalysed reaction is D-mannose 6-phosphate = D-fructose 6-phosphate. Inhibited by 5-phosphoarabinonate (PAB) and 6-phosphogluconate. Dual specificity isomerase that catalyzes the isomerization of both glucose-6-phosphate and mannose-6-phosphate to fructose-6-phosphate with similar catalytic efficiency. This chain is Bifunctional phosphoglucose/phosphomannose isomerase, found in Pyrobaculum aerophilum (strain ATCC 51768 / DSM 7523 / JCM 9630 / CIP 104966 / NBRC 100827 / IM2).